We begin with the raw amino-acid sequence, 336 residues long: Dihydroorotate dehydrogenase (quinone) (336 aa).

FMN-binding positions include 62–66 and Thr86; that span reads AGLDK. Position 66 (Lys66) interacts with substrate. Substrate is bound at residue 111–115; sequence NRMGF. FMN is bound by residues Asn139 and Asn172. Position 172 (Asn172) interacts with substrate. Ser175 serves as the catalytic Nucleophile. A substrate-binding site is contributed by Asn177. FMN is bound by residues Lys217 and Thr245. 246 to 247 contributes to the substrate binding site; it reads NT. FMN contacts are provided by residues Gly268, Gly297, and 318–319; that span reads YS.

The protein belongs to the dihydroorotate dehydrogenase family. Type 2 subfamily. In terms of assembly, monomer. FMN is required as a cofactor.

The protein localises to the cell membrane. The catalysed reaction is (S)-dihydroorotate + a quinone = orotate + a quinol. Its pathway is pyrimidine metabolism; UMP biosynthesis via de novo pathway; orotate from (S)-dihydroorotate (quinone route): step 1/1. Catalyzes the conversion of dihydroorotate to orotate with quinone as electron acceptor. This Proteus mirabilis (strain HI4320) protein is Dihydroorotate dehydrogenase (quinone).